The primary structure comprises 328 residues: Putative P2Y purinoceptor 10 (328 aa).

Residues 1–27 (MGSNSTSSAESNCNATYLPFQYSLYAT) are Extracellular-facing. 2 N-linked (GlcNAc...) asparagine glycosylation sites follow: asparagine 4 and asparagine 14. The chain crosses the membrane as a helical span at residues 28–48 (TYIFIFIPGLLANSAALWVLC). Residues 49 to 56 (RFISKKNK) lie on the Cytoplasmic side of the membrane. A helical membrane pass occupies residues 57–77 (AIIFMINLSVADLAHILSLPL). Over 78 to 91 (RIYYYINRHWPFQR) the chain is Extracellular. A helical membrane pass occupies residues 92–112 (ALCLLCFYLKYLNMYASIFFL). An intrachain disulfide couples cysteine 94 to cysteine 170. Residues 113 to 137 (TCISLQRCLFLLKPFRARNWKRRYD) are Cytoplasmic-facing. The helical transmembrane segment at 138–158 (VGISAVIWIVVGTACLPFPIL) threads the bilayer. The Extracellular segment spans residues 159–182 (RNAGLANSTDSCFADLGYKQMDAV). A helical membrane pass occupies residues 183-203 (VLVTMVVIAELAGFVIPVITI). The Cytoplasmic portion of the chain corresponds to 204-233 (ACCTWKTTVSLKHPPIAFQGISERKKALRM). A helical membrane pass occupies residues 234 to 254 (VFMCAAVFVICFTPYHINFIF). Residues 255 to 277 (YTMVKESIITSCPTVKSTLYFHP) lie on the Extracellular side of the membrane. The helical transmembrane segment at 278–298 (FSLCLASLCCLLDPILYYFMA) threads the bilayer. Over 299-328 (SEFRDQLSRHGSSVTRSRLMSRESGSSMVN) the chain is Cytoplasmic.

The protein belongs to the G-protein coupled receptor 1 family.

The protein localises to the cell membrane. In terms of biological role, putative receptor for purines coupled to G-proteins. The chain is Putative P2Y purinoceptor 10 (P2ry10) from Mus musculus (Mouse).